The following is a 449-amino-acid chain: 23S rRNA (uracil(1939)-C(5))-methyltransferase RlmD (449 aa).

One can recognise a TRAM domain in the interval 12–70 (SKQLSAKQSFSVHQLDHLGAGIAQHQGKVVFIPGALPSETVQAQLTEQKKNYARAKLIK). 4 residues coordinate [4Fe-4S] cluster: C83, C89, C92, and C170. Positions 282, 311, 316, 332, 359, and 379 each coordinate S-adenosyl-L-methionine. C405 functions as the Nucleophile in the catalytic mechanism.

It belongs to the class I-like SAM-binding methyltransferase superfamily. RNA M5U methyltransferase family. RlmD subfamily.

It carries out the reaction uridine(1939) in 23S rRNA + S-adenosyl-L-methionine = 5-methyluridine(1939) in 23S rRNA + S-adenosyl-L-homocysteine + H(+). In terms of biological role, catalyzes the formation of 5-methyl-uridine at position 1939 (m5U1939) in 23S rRNA. This chain is 23S rRNA (uracil(1939)-C(5))-methyltransferase RlmD, found in Shewanella sp. (strain MR-7).